Consider the following 308-residue polypeptide: Ribosomal RNA large subunit methyltransferase F (308 aa).

This sequence belongs to the methyltransferase superfamily. METTL16/RlmF family.

It localises to the cytoplasm. It catalyses the reaction adenosine(1618) in 23S rRNA + S-adenosyl-L-methionine = N(6)-methyladenosine(1618) in 23S rRNA + S-adenosyl-L-homocysteine + H(+). In terms of biological role, specifically methylates the adenine in position 1618 of 23S rRNA. The protein is Ribosomal RNA large subunit methyltransferase F of Escherichia coli O6:H1 (strain CFT073 / ATCC 700928 / UPEC).